A 467-amino-acid polypeptide reads, in one-letter code: Stromal membrane-associated protein 1 (467 aa).

The Arf-GAP domain maps to Gln18–Ile136. A C4-type zinc finger spans residues Cys33–Cys56. Residues Pro145–Leu155 are compositionally biased toward polar residues. 2 disordered regions span residues Pro145–Pro224 and Lys408–Lys467. 2 stretches are compositionally biased toward basic and acidic residues: residues Asp160–Ala185 and Lys192–Lys204. The Interaction with clathrin heavy chains motif lies at Leu218–Asp222. The segment covering Gln413–Pro438 has biased composition (polar residues). Positions Ser446–Lys467 are enriched in low complexity.

Interacts with ARF6. Interacts with clathrin heavy chains via the clathrin box-like motif. As to expression, detected in bone marrow, adrenal gland, trachea, lymph node, spinal cord, peripheral blood leukocytes, thyroid and stomach.

It is found in the cell membrane. In terms of biological role, GTPase activating protein that acts on ARF6. Plays a role in clathrin-dependent endocytosis. May play a role in erythropoiesis. This Homo sapiens (Human) protein is Stromal membrane-associated protein 1 (SMAP1).